Here is a 218-residue protein sequence, read N- to C-terminus: Probable transaldolase (218 aa).

Lys83 functions as the Schiff-base intermediate with substrate in the catalytic mechanism.

Belongs to the transaldolase family. Type 3B subfamily.

It localises to the cytoplasm. It catalyses the reaction D-sedoheptulose 7-phosphate + D-glyceraldehyde 3-phosphate = D-erythrose 4-phosphate + beta-D-fructose 6-phosphate. It functions in the pathway carbohydrate degradation; pentose phosphate pathway; D-glyceraldehyde 3-phosphate and beta-D-fructose 6-phosphate from D-ribose 5-phosphate and D-xylulose 5-phosphate (non-oxidative stage): step 2/3. In terms of biological role, transaldolase is important for the balance of metabolites in the pentose-phosphate pathway. This Thermotoga petrophila (strain ATCC BAA-488 / DSM 13995 / JCM 10881 / RKU-1) protein is Probable transaldolase.